Reading from the N-terminus, the 732-residue chain is S-adenosyl-L-methionine-dependent tRNA 4-demethylwyosine synthase TYW1 (732 aa).

A Flavodoxin-like domain is found at 79 to 237 (VKIFYGSQTG…DFRAWKTKFI (159 aa)). Residues 85–89 (SQTGT) and 176–208 (VFGL…HRVM) each bind FMN. Positions 248 to 314 (RKKSCGGHCK…HQSLNSIVDV (67 aa)) are disordered. Over residues 259 to 286 (GKCESHQHGSEEREEGSHEQDELHHRDT) the composition is skewed to basic and acidic residues. A compositionally biased stretch (acidic residues) spans 287–301 (EEEEPFESSSEEEFG). Residues 400–644 (YGIESHRCME…VDLIPEYEIA (245 aa)) form the Radical SAM core domain. Residues C416, C420, and C423 each contribute to the [4Fe-4S] cluster site.

The protein belongs to the TYW1 family. The cofactor is [4Fe-4S] cluster.

It carries out the reaction N(1)-methylguanosine(37) in tRNA(Phe) + pyruvate + S-adenosyl-L-methionine = 4-demethylwyosine(37) in tRNA(Phe) + 5'-deoxyadenosine + L-methionine + CO2 + H2O. The protein operates within tRNA modification; wybutosine-tRNA(Phe) biosynthesis. Its function is as follows. Probable component of the wybutosine biosynthesis pathway. Wybutosine is a hyper modified guanosine with a tricyclic base found at the 3'-position adjacent to the anticodon of eukaryotic phenylalanine tRNA. Catalyzes the condensation of N-methylguanine with 2 carbon atoms from pyruvate to form the tricyclic 4-demethylwyosine, an intermediate in wybutosine biosynthesis. The polypeptide is S-adenosyl-L-methionine-dependent tRNA 4-demethylwyosine synthase TYW1 (TYW1) (Homo sapiens (Human)).